The following is a 181-amino-acid chain: Cyclic AMP-dependent transcription factor ATF-3 (181 aa).

The disordered stretch occupies residues 76–96 (VTKSEVAPEEDERKRRRRERN). Lys78 is covalently cross-linked (Glycyl lysine isopeptide (Lys-Gly) (interchain with G-Cter in SUMO2)). The bZIP domain occupies 86–149 (DERKRRRRER…QHLIYMLNLH (64 aa)). Residues 88–110 (RKRRRRERNKIAAAKCRNKKKEK) are basic motif. The tract at residues 114–142 (LQKESEKLESVNAELKAQIEELKNEKQHL) is leucine-zipper. Thr162 is modified (phosphothreonine). Residue Lys175 forms a Glycyl lysine isopeptide (Lys-Gly) (interchain with G-Cter in SUMO2) linkage.

Belongs to the bZIP family. ATF subfamily. In terms of assembly, ATF3 alone can bind DNA, but it preferentially forms heteromeric complexes with JUN and JUNB and does not interact with FOS. In terms of tissue distribution, expressed in tissues containing skeletal muscle or smooth muscle. Expressed in cutaneous and muscular sensory neurons.

Its subcellular location is the nucleus. Its function is as follows. This protein binds the cAMP response element (CRE) (consensus: 5'-GTGACGT[AC][AG]-3'), a sequence present in many viral and cellular promoters. Represses transcription from promoters with ATF sites. It may repress transcription by stabilizing the binding of inhibitory cofactors at the promoter. The protein is Cyclic AMP-dependent transcription factor ATF-3 (Atf3) of Rattus norvegicus (Rat).